Reading from the N-terminus, the 597-residue chain is Aspartate--tRNA ligase (597 aa).

Glu171 is a binding site for L-aspartate. The segment at 195–198 (QLFK) is aspartate. Arg217 contacts L-aspartate. ATP contacts are provided by residues 217 to 219 (RDE) and Gln226. His448 contributes to the L-aspartate binding site. Glu482 serves as a coordination point for ATP. Arg489 provides a ligand contact to L-aspartate. 534–537 (GLDR) provides a ligand contact to ATP.

Belongs to the class-II aminoacyl-tRNA synthetase family. Type 1 subfamily. As to quaternary structure, homodimer.

It is found in the cytoplasm. The catalysed reaction is tRNA(Asp) + L-aspartate + ATP = L-aspartyl-tRNA(Asp) + AMP + diphosphate. Functionally, catalyzes the attachment of L-aspartate to tRNA(Asp) in a two-step reaction: L-aspartate is first activated by ATP to form Asp-AMP and then transferred to the acceptor end of tRNA(Asp). This is Aspartate--tRNA ligase from Photobacterium profundum (strain SS9).